A 385-amino-acid polypeptide reads, in one-letter code: Glutamate 5-kinase (385 aa).

K17 serves as a coordination point for ATP. Residues S64, D151, and N165 each contribute to the substrate site. 185 to 186 (SD) provides a ligand contact to ATP. Residues 291–367 (SGTVRVDAGA…DQIENVLGYS (77 aa)) form the PUA domain.

The protein belongs to the glutamate 5-kinase family.

It localises to the cytoplasm. It carries out the reaction L-glutamate + ATP = L-glutamyl 5-phosphate + ADP. It functions in the pathway amino-acid biosynthesis; L-proline biosynthesis; L-glutamate 5-semialdehyde from L-glutamate: step 1/2. In terms of biological role, catalyzes the transfer of a phosphate group to glutamate to form L-glutamate 5-phosphate. The polypeptide is Glutamate 5-kinase (Methanosarcina mazei (strain ATCC BAA-159 / DSM 3647 / Goe1 / Go1 / JCM 11833 / OCM 88) (Methanosarcina frisia)).